The sequence spans 316 residues: MSSQKQLEGMIFDVQSFSVHDGPGCRTTVFLNGCPLSCKWCANPESWTVRPHMMFSELSCQYENGCTVCHGKCKNGALSFNLDNKPVIDWNICKDCESFECVNSCYYNAFKLCAKPYTVDELVQVIKRDSNNWRSNGGVTFSGGEPLLQHEFLHEVLLKCHEVNIHTAIETSACVSNEVFNKIFKDIDFAFIDIKHMDREKHKEQTGVYNDLILENISNLANSDWNGRLVLRVPVISGFNDSAENISDIISFMHKNNLIEINLLPFHRLGESKWIQLGKEYEYSDKGDIDEEHLEELQDIFLDNGIACYVGHETAF.

The Radical SAM core domain maps to 20–307 (HDGPGCRTTV…QDIFLDNGIA (288 aa)). [4Fe-4S] cluster is bound by residues C34, C38, C41, C60, C66, C69, and C105. 40–42 (WCA) serves as a coordination point for S-adenosyl-L-methionine. Residues 84 to 115 (NKPVIDWNICKDCESFECVNSCYYNAFKLCAK) enclose the 4Fe-4S ferredoxin-type domain. Residues G144, 193 to 195 (DIK), and H267 each bind S-adenosyl-L-methionine.

It belongs to the organic radical-activating enzymes family. As to quaternary structure, monomer. The cofactor is [4Fe-4S] cluster.

The enzyme catalyses glycyl-[protein] + reduced [flavodoxin] + S-adenosyl-L-methionine = glycin-2-yl radical-[protein] + semiquinone [flavodoxin] + 5'-deoxyadenosine + L-methionine + H(+). Its function is as follows. Catalyzes activation of 4-hydroxyphenylacetate decarboxylase under anaerobic conditions by generation of an organic free radical on a glycine residue, via a homolytic cleavage of S-adenosyl-L-methionine (SAM). The chain is 4-hydroxyphenylacetate decarboxylase activating enzyme from Clostridioides difficile (strain CD196) (Peptoclostridium difficile).